Consider the following 334-residue polypeptide: MALRWGIVSVGLISSDFTAVLQTLPRSEHQVVAVAARDLSRAKEFAQKHDIPKAYGSYEELAKDPNVEVAYVGTQHPQHKAAVMLCLAAGKAVLCEKPMGVNAAEVREMVTEARSRGLFLMEAIWTRFFPASEALRSVLAQGTLGDLRVARAEFGKNLTHVPRAVDWAQAGGALLDLGIYCVQFISMVFGGQKPEKISVMGRRHETGVDDTVTVLLQYPGEVHGSFTCSITAQLSNTASVSGTKGMAQLLNPCWCPTELVVKGEHKEFLLPPVPKNCNFDNGAGMSYEAKHVRECLRKGLKESPVIPLVESELLADILEEVRRAIGVTFPQDKH.

It belongs to the Gfo/Idh/MocA family. As to quaternary structure, homodimer. Kidney.

It carries out the reaction (1R,2R)-1,2-dihydrobenzene-1,2-diol + NADP(+) = catechol + NADPH + H(+). The catalysed reaction is D-xylose + NADP(+) = D-xylono-1,5-lactone + NADPH + H(+). In Macaca fascicularis (Crab-eating macaque), this protein is Trans-1,2-dihydrobenzene-1,2-diol dehydrogenase (DHDH).